A 482-amino-acid polypeptide reads, in one-letter code: Glutamyl-tRNA(Gln) amidotransferase subunit A (482 aa).

Residues Lys80 and Ser159 each act as charge relay system in the active site. The Acyl-ester intermediate role is filled by Ser183.

The protein belongs to the amidase family. GatA subfamily. As to quaternary structure, heterotrimer of A, B and C subunits.

The enzyme catalyses L-glutamyl-tRNA(Gln) + L-glutamine + ATP + H2O = L-glutaminyl-tRNA(Gln) + L-glutamate + ADP + phosphate + H(+). Its function is as follows. Allows the formation of correctly charged Gln-tRNA(Gln) through the transamidation of misacylated Glu-tRNA(Gln) in organisms which lack glutaminyl-tRNA synthetase. The reaction takes place in the presence of glutamine and ATP through an activated gamma-phospho-Glu-tRNA(Gln). This chain is Glutamyl-tRNA(Gln) amidotransferase subunit A, found in Neorickettsia sennetsu (strain ATCC VR-367 / Miyayama) (Ehrlichia sennetsu).